Here is a 430-residue protein sequence, read N- to C-terminus: MKETIDFLIDTIEARQVLDSRGNPTVEAEVFLECGASGRAIVPSGASTGAHEAHELRDGGSKYMGKGVLNAVNKIHETISPALCGLSALDQTTVDKLMIEIDGTFNKSNLGANSILAVSLATARASANALDVPLYRYLGDPLSNLLPVPLMNVINGGAHAPNSLDFQEFMLVPHGVQNFSESLRMGTEIFHSLKSLLDKKGLSTAVGDEGGFAPNLSSSEEAGDLLLEAIQKAGFIPGEQVSLALDAASTEFYSDGIYKYEGKSLNSSEMISYLSRLVSNYPIVSIEDGLAEDDWEGWSELNKELGNKVQLVGDDLFVTNTERLRKGIMEKSANSILIKVNQIGTLTETLEAIELAKTSGFTSVISHRSGETEDTTIADLSVATRSGQIKTGSLSRSERIAKYNRLLKIEEELGNQARFAGALGLGPKNI.

A (2R)-2-phosphoglycerate-binding site is contributed by Gln-167. Glu-209 functions as the Proton donor in the catalytic mechanism. Residues Asp-246, Glu-287, and Asp-314 each coordinate Mg(2+). (2R)-2-phosphoglycerate is bound by residues Lys-339, Arg-368, Ser-369, and Lys-390. Lys-339 serves as the catalytic Proton acceptor.

This sequence belongs to the enolase family. The cofactor is Mg(2+).

The protein resides in the cytoplasm. The protein localises to the secreted. Its subcellular location is the cell surface. The catalysed reaction is (2R)-2-phosphoglycerate = phosphoenolpyruvate + H2O. It participates in carbohydrate degradation; glycolysis; pyruvate from D-glyceraldehyde 3-phosphate: step 4/5. Functionally, catalyzes the reversible conversion of 2-phosphoglycerate (2-PG) into phosphoenolpyruvate (PEP). It is essential for the degradation of carbohydrates via glycolysis. This chain is Enolase, found in Prochlorococcus marinus (strain MIT 9312).